The sequence spans 222 residues: Deoxyribose-phosphate aldolase (222 aa).

Catalysis depends on D89, which acts as the Proton donor/acceptor. K151 functions as the Schiff-base intermediate with acetaldehyde in the catalytic mechanism. The active-site Proton donor/acceptor is K180.

The protein belongs to the DeoC/FbaB aldolase family. DeoC type 1 subfamily.

It localises to the cytoplasm. It carries out the reaction 2-deoxy-D-ribose 5-phosphate = D-glyceraldehyde 3-phosphate + acetaldehyde. It participates in carbohydrate degradation; 2-deoxy-D-ribose 1-phosphate degradation; D-glyceraldehyde 3-phosphate and acetaldehyde from 2-deoxy-alpha-D-ribose 1-phosphate: step 2/2. Its function is as follows. Catalyzes a reversible aldol reaction between acetaldehyde and D-glyceraldehyde 3-phosphate to generate 2-deoxy-D-ribose 5-phosphate. This chain is Deoxyribose-phosphate aldolase, found in Acholeplasma laidlawii (strain PG-8A).